The sequence spans 400 residues: Argininosuccinate synthase (400 aa).

8 to 16 (AYSGGLDTS) contributes to the ATP binding site. Tyr-87 and Ser-92 together coordinate L-citrulline. Gly-117 provides a ligand contact to ATP. L-aspartate is bound by residues Thr-119, Asn-123, and Asp-124. Residue Asn-123 coordinates L-citrulline. The L-citrulline site is built by Arg-127, Ser-175, Glu-259, and Tyr-271.

The protein belongs to the argininosuccinate synthase family. Type 1 subfamily. As to quaternary structure, homotetramer.

The protein localises to the cytoplasm. The catalysed reaction is L-citrulline + L-aspartate + ATP = 2-(N(omega)-L-arginino)succinate + AMP + diphosphate + H(+). It functions in the pathway amino-acid biosynthesis; L-arginine biosynthesis; L-arginine from L-ornithine and carbamoyl phosphate: step 2/3. In Parafrankia sp. (strain EAN1pec), this protein is Argininosuccinate synthase.